The primary structure comprises 198 residues: Superoxide dismutase [Fe] (198 aa).

His-27, His-74, Asp-157, and His-161 together coordinate Fe(3+).

The protein belongs to the iron/manganese superoxide dismutase family. In terms of assembly, homodimer. It depends on Fe(3+) as a cofactor.

It catalyses the reaction 2 superoxide + 2 H(+) = H2O2 + O2. In terms of biological role, destroys superoxide anion radicals which are normally produced within the cells and which are toxic to biological systems. This Pseudomonas putida (Arthrobacter siderocapsulatus) protein is Superoxide dismutase [Fe] (sodB).